The primary structure comprises 293 residues: MSEKAGGVPAHLVSGFFGGLASVCALQPLDLLKTRLQQAQASSLRSVLREVRTTRELWRGTLPSALRTSIGSALYLSLLNYSRSALARGSEARTRSSLLPRLQSYQNLLTGALSRAAVGLVTMPITVIKVRYESTLYAYNGLAEATRHIWRSEGARGFFKGAAATTLRDAPYAGLYVLLYEQAKEMLPRALPATLLGADESGKLTAPASAMVNGVSAFLSASLATTLTAPFDTIKTRMQLQSHPVGFVQTLRHIVCEERARTLFDGLSLRLCRKAMSACIAWGIYEELLKLLH.

3 Solcar repeats span residues 6–85 (GGVP…SRSA), 102–186 (LQSY…AKEM), and 208–291 (ASAM…LLKL). 6 helical membrane passes run 12 to 37 (LVSG…TRLQ), 60 to 86 (GTLP…RSAL), 108 to 133 (LLTG…VRYE), 161 to 184 (GAAA…EQAK), 212 to 238 (VNGV…KTRM), and 266 to 284 (GLSL…AWGI).

It belongs to the mitochondrial carrier (TC 2.A.29) family. SLC25A38 subfamily.

It is found in the mitochondrion inner membrane. It carries out the reaction glycine(in) = glycine(out). Mitochondrial glycine transporter that imports glycine into the mitochondrial matrix. Plays an important role in providing glycine for the first enzymatic step in heme biosynthesis, the condensation of glycine with succinyl-CoA to produce 5-aminolevulinate (ALA) in the mitochondrial matrix. This chain is Mitochondrial glycine transporter, found in Eremothecium gossypii (strain ATCC 10895 / CBS 109.51 / FGSC 9923 / NRRL Y-1056) (Yeast).